A 225-amino-acid chain; its full sequence is Uridylate kinase (225 aa).

9–10 lines the ATP pocket; the sequence is GS. Glycine 43 lines the UMP pocket. 2 residues coordinate ATP: glycine 44 and arginine 48. UMP-binding positions include aspartate 65 and 113–119; that span reads TEPAHST. ATP contacts are provided by threonine 139, tyrosine 145, and aspartate 148.

Belongs to the UMP kinase family. In terms of assembly, homohexamer.

Its subcellular location is the cytoplasm. It catalyses the reaction UMP + ATP = UDP + ADP. It functions in the pathway pyrimidine metabolism; CTP biosynthesis via de novo pathway; UDP from UMP (UMPK route): step 1/1. Inhibited by UTP. Its function is as follows. Catalyzes the reversible phosphorylation of UMP to UDP. The polypeptide is Uridylate kinase (Methanobrevibacter smithii (strain ATCC 35061 / DSM 861 / OCM 144 / PS)).